Consider the following 224-residue polypeptide: Large ribosomal subunit protein uL4 (224 aa).

The tract at residues asparagine 54–asparagine 73 is disordered.

Belongs to the universal ribosomal protein uL4 family. In terms of assembly, part of the 50S ribosomal subunit.

Functionally, one of the primary rRNA binding proteins, this protein initially binds near the 5'-end of the 23S rRNA. It is important during the early stages of 50S assembly. It makes multiple contacts with different domains of the 23S rRNA in the assembled 50S subunit and ribosome. Forms part of the polypeptide exit tunnel. This Chlamydia felis (strain Fe/C-56) (Chlamydophila felis) protein is Large ribosomal subunit protein uL4.